A 58-amino-acid chain; its full sequence is UPF0391 membrane protein MADE_1011595 (58 aa).

The next 2 membrane-spanning stretches (helical) occupy residues 4–24 (WAIT…GGIA) and 27–47 (ATGI…ISLI).

The protein belongs to the UPF0391 family.

Its subcellular location is the cell membrane. The polypeptide is UPF0391 membrane protein MADE_1011595 (Alteromonas mediterranea (strain DSM 17117 / CIP 110805 / LMG 28347 / Deep ecotype)).